The following is a 37-amino-acid chain: Photosystem II reaction center protein K (37 aa).

Topologically, residues Lys1–Val15 are lumenal. A helical membrane pass occupies residues Leu16–Val30. Residues Gln31–Arg37 are Cytoplasmic-facing.

It belongs to the PsbK family. PSII is composed of 1 copy each of membrane proteins PsbA, PsbB, PsbC, PsbD, PsbE, PsbF, PsbH, PsbI, PsbJ, PsbK, PsbL, PsbM, PsbT, PsbX, PsbY, PsbZ, Psb30/Ycf12, peripheral proteins PsbO, CyanoQ (PsbQ), PsbU, PsbV and a large number of cofactors. It forms dimeric complexes. Requires PSII binds multiple chlorophylls, carotenoids and specific lipids. as cofactor.

Its subcellular location is the cellular thylakoid membrane. Functionally, one of the components of the core complex of photosystem II (PSII). PSII is a light-driven water:plastoquinone oxidoreductase that uses light energy to abstract electrons from H(2)O, generating O(2) and a proton gradient subsequently used for ATP formation. It consists of a core antenna complex that captures photons, and an electron transfer chain that converts photonic excitation into a charge separation. The chain is Photosystem II reaction center protein K from Thermostichus vulcanus (Synechococcus vulcanus).